A 353-amino-acid polypeptide reads, in one-letter code: Phosphate acyltransferase (353 aa).

Belongs to the PlsX family. In terms of assembly, homodimer. Probably interacts with PlsY.

It localises to the cytoplasm. It catalyses the reaction a fatty acyl-[ACP] + phosphate = an acyl phosphate + holo-[ACP]. It participates in lipid metabolism; phospholipid metabolism. Its function is as follows. Catalyzes the reversible formation of acyl-phosphate (acyl-PO(4)) from acyl-[acyl-carrier-protein] (acyl-ACP). This enzyme utilizes acyl-ACP as fatty acyl donor, but not acyl-CoA. This chain is Phosphate acyltransferase, found in Rhodopseudomonas palustris (strain BisB18).